Reading from the N-terminus, the 71-residue chain is uncharacterized protein (71 aa).

This is an uncharacterized protein from Dictyostelium discoideum (Social amoeba).